The chain runs to 446 residues: Phosphoglucosamine mutase (446 aa).

S99 (phosphoserine intermediate) is an active-site residue. 4 residues coordinate Mg(2+): S99, D242, D244, and D246. S99 is modified (phosphoserine).

It belongs to the phosphohexose mutase family. Mg(2+) serves as cofactor. Activated by phosphorylation.

The enzyme catalyses alpha-D-glucosamine 1-phosphate = D-glucosamine 6-phosphate. Functionally, catalyzes the conversion of glucosamine-6-phosphate to glucosamine-1-phosphate. The chain is Phosphoglucosamine mutase from Campylobacter concisus (strain 13826).